The primary structure comprises 588 residues: Acid beta-fructofuranosidase 1, vacuolar (588 aa).

Residues 1–31 (MDTSTSAYAPLPGEDPLFSGHPPASLRRSWK) lie on the Cytoplasmic side of the membrane. The propeptide at 1–115 (MDTSTSAYAP…LSYNWTNAMF (115 aa)) is removed in mature form. The chain crosses the membrane as a helical; Signal-anchor for type II membrane protein span at residues 32–52 (GFAVIFASVLFLLSLVGLIIH). Topologically, residues 53–588 (QGPQQPPDVM…LRALRKEVGR (536 aa)) are lumenal. Residues 57-86 (QPPDVMPDKQDEHHHPQSTTPASETTASWE) form a disordered region. Positions 62–71 (MPDKQDEHHH) are enriched in basic and acidic residues. Residues 73 to 84 (QSTTPASETTAS) are compositionally biased toward polar residues. Substrate contacts are provided by residues 130–133 (WMND), Q149, and W157. Residue D133 is part of the active site. N-linked (GlcNAc...) asparagine glycosylation is present at N159. 192-193 (WS) contacts substrate. The N-linked (GlcNAc...) asparagine glycan is linked to N226. Substrate-binding positions include 256-257 (RD), E311, and D344. The cysteines at positions 499 and 545 are disulfide-linked.

It belongs to the glycosyl hydrolase 32 family. As to quaternary structure, monomer. May be present in two forms, a 70 kDa monomer and a heterodimer of the 30 kDa and 38 kDa subunits. The ratio of the levels of the two forms within cells appears to be regulated developmentally. Post-translationally, glycosylated. In terms of tissue distribution, expressed in buds, stems, roots and leaves. Expressed in the epidermal cells of young leaves and of primordial leaves.

The protein localises to the membrane. It localises to the vacuole lumen. The enzyme catalyses Hydrolysis of terminal non-reducing beta-D-fructofuranoside residues in beta-D-fructofuranosides.. In terms of biological role, acidic vacuolar invertase involved in light-induced bud burst. This chain is Acid beta-fructofuranosidase 1, vacuolar, found in Rosa hybrid cultivar.